Consider the following 502-residue polypeptide: Cardiolipin synthase (502 aa).

3 consecutive transmembrane segments (helical) span residues 7-27, 29-49, and 59-79; these read VIIF…YWEG, LLGG…FVIS, and ITWL…YLMF. 2 consecutive PLD phosphodiesterase domains span residues 237–264 and 415–442; these read INFR…GDEY and SKGF…DMRS. Catalysis depends on residues histidine 242, lysine 244, aspartate 249, histidine 420, lysine 422, and aspartate 427.

This sequence belongs to the phospholipase D family. Cardiolipin synthase subfamily.

It localises to the cell membrane. The enzyme catalyses 2 a 1,2-diacyl-sn-glycero-3-phospho-(1'-sn-glycerol) = a cardiolipin + glycerol. In terms of biological role, catalyzes the reversible phosphatidyl group transfer from one phosphatidylglycerol molecule to another to form cardiolipin (CL) (diphosphatidylglycerol) and glycerol. This is Cardiolipin synthase (cls) from Geobacillus sp. (strain WCH70).